We begin with the raw amino-acid sequence, 352 residues long: Uroporphyrinogen decarboxylase (352 aa).

Substrate is bound by residues 26–30 (RQAGR), Phe45, Asp76, Tyr153, Ser208, and His323.

The protein belongs to the uroporphyrinogen decarboxylase family. As to quaternary structure, homodimer.

It localises to the cytoplasm. It catalyses the reaction uroporphyrinogen III + 4 H(+) = coproporphyrinogen III + 4 CO2. It participates in porphyrin-containing compound metabolism; protoporphyrin-IX biosynthesis; coproporphyrinogen-III from 5-aminolevulinate: step 4/4. In terms of biological role, catalyzes the decarboxylation of four acetate groups of uroporphyrinogen-III to yield coproporphyrinogen-III. This chain is Uroporphyrinogen decarboxylase, found in Prochlorococcus marinus (strain MIT 9313).